A 156-amino-acid polypeptide reads, in one-letter code: 6,7-dimethyl-8-ribityllumazine synthase (156 aa).

Residues Phe23, 57 to 59, and 81 to 83 contribute to the 5-amino-6-(D-ribitylamino)uracil site; these read AYE and AII. 86–87 contributes to the (2S)-2-hydroxy-3-oxobutyl phosphate binding site; sequence GT. His89 (proton donor) is an active-site residue. 5-amino-6-(D-ribitylamino)uracil is bound at residue Phe114. A (2S)-2-hydroxy-3-oxobutyl phosphate-binding site is contributed by Arg128.

Belongs to the DMRL synthase family.

The catalysed reaction is (2S)-2-hydroxy-3-oxobutyl phosphate + 5-amino-6-(D-ribitylamino)uracil = 6,7-dimethyl-8-(1-D-ribityl)lumazine + phosphate + 2 H2O + H(+). It functions in the pathway cofactor biosynthesis; riboflavin biosynthesis; riboflavin from 2-hydroxy-3-oxobutyl phosphate and 5-amino-6-(D-ribitylamino)uracil: step 1/2. Catalyzes the formation of 6,7-dimethyl-8-ribityllumazine by condensation of 5-amino-6-(D-ribitylamino)uracil with 3,4-dihydroxy-2-butanone 4-phosphate. This is the penultimate step in the biosynthesis of riboflavin. The sequence is that of 6,7-dimethyl-8-ribityllumazine synthase from Helicobacter acinonychis (strain Sheeba).